The chain runs to 299 residues: ATP synthase gamma chain (299 aa).

The protein belongs to the ATPase gamma chain family. F-type ATPases have 2 components, CF(1) - the catalytic core - and CF(0) - the membrane proton channel. CF(1) has five subunits: alpha(3), beta(3), gamma(1), delta(1), epsilon(1). CF(0) has three main subunits: a, b and c.

Its subcellular location is the cell membrane. Functionally, produces ATP from ADP in the presence of a proton gradient across the membrane. The gamma chain is believed to be important in regulating ATPase activity and the flow of protons through the CF(0) complex. The sequence is that of ATP synthase gamma chain from Clavibacter sepedonicus (Clavibacter michiganensis subsp. sepedonicus).